Here is a 361-residue protein sequence, read N- to C-terminus: D-alanine--D-alanine ligase (361 aa).

In terms of domain architecture, ATP-grasp spans 134–344 (KLLLKSFDIP…FKDLVDNLID (211 aa)). 167 to 222 (KEVLGYPVIVKPAVLGSSIGINVAYSENQIESFIKEALKYDLTIVIEKFIEAREIE) contributes to the ATP binding site. D297, E311, and N313 together coordinate Mg(2+).

Belongs to the D-alanine--D-alanine ligase family. Mg(2+) is required as a cofactor. Mn(2+) serves as cofactor.

It localises to the cytoplasm. It carries out the reaction 2 D-alanine + ATP = D-alanyl-D-alanine + ADP + phosphate + H(+). It participates in cell wall biogenesis; peptidoglycan biosynthesis. Functionally, cell wall formation. The chain is D-alanine--D-alanine ligase from Borreliella burgdorferi (strain ATCC 35210 / DSM 4680 / CIP 102532 / B31) (Borrelia burgdorferi).